Here is a 341-residue protein sequence, read N- to C-terminus: Glycerol-3-phosphate dehydrogenase [NAD(P)+] (341 aa).

Residues S15, W16, R36, and K110 each contribute to the NADPH site. Residues K110, G139, and S141 each contribute to the sn-glycerol 3-phosphate site. A143 provides a ligand contact to NADPH. Residues K194, D247, S257, R258, and N259 each contribute to the sn-glycerol 3-phosphate site. K194 (proton acceptor) is an active-site residue. R258 provides a ligand contact to NADPH. NADPH-binding residues include V282 and E284.

It belongs to the NAD-dependent glycerol-3-phosphate dehydrogenase family.

It is found in the cytoplasm. The enzyme catalyses sn-glycerol 3-phosphate + NAD(+) = dihydroxyacetone phosphate + NADH + H(+). It catalyses the reaction sn-glycerol 3-phosphate + NADP(+) = dihydroxyacetone phosphate + NADPH + H(+). Its pathway is membrane lipid metabolism; glycerophospholipid metabolism. Catalyzes the reduction of the glycolytic intermediate dihydroxyacetone phosphate (DHAP) to sn-glycerol 3-phosphate (G3P), the key precursor for phospholipid synthesis. This chain is Glycerol-3-phosphate dehydrogenase [NAD(P)+], found in Xanthomonas oryzae pv. oryzae (strain MAFF 311018).